We begin with the raw amino-acid sequence, 498 residues long: ATP synthase subunit beta, chloroplastic (498 aa).

Residue 172–179 (GGAGVGKT) participates in ATP binding.

The protein belongs to the ATPase alpha/beta chains family. As to quaternary structure, F-type ATPases have 2 components, CF(1) - the catalytic core - and CF(0) - the membrane proton channel. CF(1) has five subunits: alpha(3), beta(3), gamma(1), delta(1), epsilon(1). CF(0) has four main subunits: a(1), b(1), b'(1) and c(9-12).

It is found in the plastid. The protein resides in the chloroplast thylakoid membrane. The enzyme catalyses ATP + H2O + 4 H(+)(in) = ADP + phosphate + 5 H(+)(out). In terms of biological role, produces ATP from ADP in the presence of a proton gradient across the membrane. The catalytic sites are hosted primarily by the beta subunits. This chain is ATP synthase subunit beta, chloroplastic, found in Brasenia schreberi (Water shield).